The chain runs to 444 residues: ATP-dependent protease ATPase subunit HslU (444 aa).

ATP contacts are provided by residues I18, G60 to E65, D256, E322, and R394.

Belongs to the ClpX chaperone family. HslU subfamily. As to quaternary structure, a double ring-shaped homohexamer of HslV is capped on each side by a ring-shaped HslU homohexamer. The assembly of the HslU/HslV complex is dependent on binding of ATP.

Its subcellular location is the cytoplasm. Its function is as follows. ATPase subunit of a proteasome-like degradation complex; this subunit has chaperone activity. The binding of ATP and its subsequent hydrolysis by HslU are essential for unfolding of protein substrates subsequently hydrolyzed by HslV. HslU recognizes the N-terminal part of its protein substrates and unfolds these before they are guided to HslV for hydrolysis. The protein is ATP-dependent protease ATPase subunit HslU of Klebsiella pneumoniae subsp. pneumoniae (strain ATCC 700721 / MGH 78578).